Consider the following 236-residue polypeptide: 6-carboxyhexanoate--CoA ligase (236 aa).

It belongs to the BioW family. Homodimer. Mg(2+) is required as a cofactor.

It carries out the reaction heptanedioate + ATP + CoA = 6-carboxyhexanoyl-CoA + AMP + diphosphate. It participates in metabolic intermediate metabolism; pimeloyl-CoA biosynthesis; pimeloyl-CoA from pimelate: step 1/1. In terms of biological role, catalyzes the transformation of pimelate into pimeloyl-CoA with concomitant hydrolysis of ATP to AMP. In Methanococcus aeolicus (strain ATCC BAA-1280 / DSM 17508 / OCM 812 / Nankai-3), this protein is 6-carboxyhexanoate--CoA ligase.